The sequence spans 217 residues: Adenylate kinase (217 aa).

10–15 (GAGKGT) lines the ATP pocket. Residues 30–59 (STGDIFRSNVSQGTPLGVQAKRYMDAGELV) are NMP. Residues T31, R36, 57-59 (ELV), 85-88 (GFPR), and Q92 contribute to the AMP site. The tract at residues 126–163 (GRRTCRGCGKVWHVEFDAPSQEGRCDRCGAELFQRDDD) is LID. An ATP-binding site is contributed by R127. Positions 130, 133, 150, and 153 each coordinate Zn(2+). Positions 160 and 171 each coordinate AMP. Position 199 (G199) interacts with ATP.

The protein belongs to the adenylate kinase family. Monomer.

The protein localises to the cytoplasm. The catalysed reaction is AMP + ATP = 2 ADP. Its pathway is purine metabolism; AMP biosynthesis via salvage pathway; AMP from ADP: step 1/1. Functionally, catalyzes the reversible transfer of the terminal phosphate group between ATP and AMP. Plays an important role in cellular energy homeostasis and in adenine nucleotide metabolism. In Salinispora tropica (strain ATCC BAA-916 / DSM 44818 / JCM 13857 / NBRC 105044 / CNB-440), this protein is Adenylate kinase.